Reading from the N-terminus, the 131-residue chain is MKIALIAHDKKKDDMVSFAYAYKPIFEQHELFATGTTGLRIMEATGLVVTRYQSGPLGGDQEIGAMIAKNDLDMVIFFRDPLTAQPHEPDVNALLRLCDVYAIPLATNMASAEMLMHALERGDLDYRKLRK.

The MGS-like domain occupies 1–131 (MKIALIAHDK…GDLDYRKLRK (131 aa)). Substrate is bound by residues His-8, Lys-12, 34–37 (TGTT), and 54–55 (SG). Asp-60 serves as the catalytic Proton donor/acceptor. Position 87 (His-87) interacts with substrate.

It belongs to the methylglyoxal synthase family.

The catalysed reaction is dihydroxyacetone phosphate = methylglyoxal + phosphate. Catalyzes the formation of methylglyoxal from dihydroxyacetone phosphate. The sequence is that of Methylglyoxal synthase from Bacillus cereus (strain AH820).